The following is a 692-amino-acid chain: MELLPLWLCLGFHFLTVGWRNRSGTATAASQGVCKLVGGAADCRGQSLASVPSSLPPHARMLTLDANPLKTLWNHSLQPYPLLESLSLHSCHLERISRGAFQEQGHLRSLVLGDNCLSENYEETAAALHALPGLRRLDLSGNALTEDMAALMLQNLSSLRSVSLAGNTIMRLDDSVFEGLERLRELDLQRNYIFEIEGGAFDGLAELRHLNLAFNNLPCIVDFGLTRLRVLNVSYNVLEWFLATGGEAAFELETLDLSHNQLLFFPLLPQYSKLRTLLLRDNNMGFYRDLYNTSSPREMVAQFLLVDGNVTNITTVSLWEEFSSSDLADLRFLDMSQNQFQYLPDGFLRKMPSLSHLNLHQNCLMTLHIREHEPPGALTELDLSHNQLSELHLAPGLASCLGSLRLFNLSSNQLLGVPPGLFANARNITTLDMSHNQISLCPLPAASDRVGPPSCVDFRNMASLRSLSLEGCGLGALPDCPFQGTSLTYLDLSSNWGVLNGSLAPLQDVAPMLQVLSLRNMGLHSSFMALDFSGFGNLRDLDLSGNCLTTFPRFGGSLALETLDLRRNSLTALPQKAVSEQLSRGLRTIYLSQNPYDCCGVDGWGALQHGQTVADWAMVTCNLSSKIIRVTELPGGVPRDCKWERLDLGLLYLVLILPSCLTLLVACTVIVLTFKKPLLQVIKSRCHWSSVY.

The signal sequence occupies residues Met-1–Gly-18. Over Trp-19–Leu-650 the chain is Extracellular. Asn-21 carries an N-linked (GlcNAc...) asparagine glycan. The 28-residue stretch at Ala-29–Pro-56 folds into the LRRNT domain. LRR repeat units follow at residues His-58 to Pro-79, Leu-82 to Glu-103, His-106 to Ala-127, Gly-133 to Asn-155, Ser-158 to Gly-179, Arg-182 to Gly-203, Glu-206 to Arg-227, Leu-228 to Glu-239, Glu-251 to Ser-272, and Lys-273 to Ser-294. An N-linked (GlcNAc...) asparagine glycan is attached at Asn-74. N-linked (GlcNAc...) asparagine glycosylation is present at Asn-155. Asn-232 carries an N-linked (GlcNAc...) asparagine glycan. 3 N-linked (GlcNAc...) asparagine glycosylation sites follow: Asn-292, Asn-309, and Asn-312. 11 LRR repeats span residues Asp-329–Lys-350, Ser-353–Pro-374, Ala-377–Ala-398, Ser-403–Asn-424, Asn-427–Ser-447, Ser-463–Gly-484, Ser-486–Gln-507, Met-512–Gly-534, Asn-537–Leu-558, Ala-559–Glu-580, and Gly-585–Asn-594. Residues Asn-408 and Asn-427 are each glycosylated (N-linked (GlcNAc...) asparagine). Asn-500 is a glycosylation site (N-linked (GlcNAc...) asparagine). Residues Pro-595–Trp-643 form the LRRCT domain. The N-linked (GlcNAc...) asparagine glycan is linked to Asn-622. The helical transmembrane segment at Leu-651–Val-671 threads the bilayer. At Leu-672–Tyr-692 the chain is on the cytoplasmic side.

It belongs to the LRRC32/LRRC33 family. As to quaternary structure, interacts with TGFB1; associates via disulfide bonds with the Latency-associated peptide chain (LAP) regulatory chain of TGFB1, leading to regulate activation of TGF-beta-1. Interacts (via LRR repeats) with TLR2, TLR3, TLR4, TLR9 and probably other Toll-like receptors. Interacts with CYBB/NOX2; the interaction is direct. Mainly expressed in cells of hematopoietic origin. Highly expressed in bone marrow, thymus, liver, lung, intestine and spleen. In the brain, highly expressed in microglia.

It is found in the cell membrane. Its subcellular location is the endoplasmic reticulum membrane. Functionally, key regulator of transforming growth factor beta-1 (TGFB1) specifically required for microglia function in the nervous system. Required for activation of latent TGF-beta-1 in macrophages and microglia: associates specifically via disulfide bonds with the Latency-associated peptide (LAP), which is the regulatory chain of TGFB1, and regulates integrin-dependent activation of TGF-beta-1. TGF-beta-1 activation mediated by LRRC33/NRROS is highly localized: there is little spreading of TGF-beta-1 activated from one microglial cell to neighboring microglia, suggesting the existence of localized and selective activation of TGF-beta-1 by LRRC33/NRROS. Indirectly plays a role in Toll-like receptor (TLR) signaling: ability to inhibit TLR-mediated NF-kappa-B activation and cytokine production is probably a consequence of its role in TGF-beta-1 signaling. The polypeptide is Transforming growth factor beta activator LRRC33 (Homo sapiens (Human)).